A 198-amino-acid polypeptide reads, in one-letter code: Phosphoheptose isomerase (198 aa).

The 159-residue stretch at 40 to 198 folds into the SIS domain; it reads IIGALRGGHK…IEAALMQDAR (159 aa). 55–57 contributes to the substrate binding site; the sequence is NGG. Positions 64 and 68 each coordinate Zn(2+). Residues Glu-68, 97–98, 123–125, Ser-128, and Gln-175 contribute to the substrate site; these read ND and STS. Residues Gln-175 and His-183 each coordinate Zn(2+).

This sequence belongs to the SIS family. GmhA subfamily. Homotetramer. It depends on Zn(2+) as a cofactor.

It localises to the cytoplasm. The catalysed reaction is 2 D-sedoheptulose 7-phosphate = D-glycero-alpha-D-manno-heptose 7-phosphate + D-glycero-beta-D-manno-heptose 7-phosphate. It functions in the pathway carbohydrate biosynthesis; D-glycero-D-manno-heptose 7-phosphate biosynthesis; D-glycero-alpha-D-manno-heptose 7-phosphate and D-glycero-beta-D-manno-heptose 7-phosphate from sedoheptulose 7-phosphate: step 1/1. Functionally, catalyzes the isomerization of sedoheptulose 7-phosphate in D-glycero-D-manno-heptose 7-phosphate. The protein is Phosphoheptose isomerase of Bradyrhizobium sp. (strain ORS 278).